The chain runs to 815 residues: Ent-sandaracopimara-8(14),15-diene synthase, chloroplastic (815 aa).

The transit peptide at 1–38 (MLPSSICSMGQIPRTSPHYYGMLPKQMSKGHPPMVTRA) directs the protein to the chloroplast. Residues Asp-550, Asp-554, Asn-696, Thr-700, and Glu-704 each contribute to the Mg(2+) site. The short motif at 550–554 (DDFFD) is the DDXXD motif element.

It belongs to the terpene synthase family. The cofactor is Mg(2+).

The protein resides in the plastid. It localises to the chloroplast. It carries out the reaction ent-copalyl diphosphate = ent-sandaracopimara-8(14),15-diene + diphosphate. The catalysed reaction is 9alpha-copalyl diphosphate = (12E)-9alpha-labda-8(17),12,14-triene + diphosphate. Involved in the biosynthesis of oryzalexin A-F phytoalexins. Catalyzes the conversion of ent-copalyl diphosphate to the phytoalexin precursor ent-sandaracopimaradiene. The polypeptide is Ent-sandaracopimara-8(14),15-diene synthase, chloroplastic (Oryza sativa subsp. japonica (Rice)).